Here is a 97-residue protein sequence, read N- to C-terminus: Large ribosomal subunit protein eL21 (97 aa).

Polar residues predominate over residues 1 to 12 (MPSSNGPRQATR). Residues 1-35 (MPSSNGPRQATRNKLKNDARERGTSPPQRSIEEYD) are disordered.

Belongs to the eukaryotic ribosomal protein eL21 family.

The sequence is that of Large ribosomal subunit protein eL21 from Natronomonas pharaonis (strain ATCC 35678 / DSM 2160 / CIP 103997 / JCM 8858 / NBRC 14720 / NCIMB 2260 / Gabara) (Halobacterium pharaonis).